A 169-amino-acid chain; its full sequence is Capsid protein (169 aa).

It belongs to the nanoviridae capsid protein family.

The protein resides in the virion. The chain is Capsid protein (DNA-S) from Subterranean clover stunt virus (strain F) (SCSV).